The primary structure comprises 187 residues: CASP-like protein 3A2 (187 aa).

At Met-1 to Gln-24 the chain is on the cytoplasmic side. A helical transmembrane segment spans residues Val-25 to Ala-45. At Thr-46–Gln-71 the chain is on the extracellular side. N-linked (GlcNAc...) asparagine glycosylation occurs at Asn-63. A helical membrane pass occupies residues Tyr-72–Val-92. Over Tyr-93–Gln-107 the chain is Cytoplasmic. The chain crosses the membrane as a helical span at residues Ala-108–Ala-128. Residues Gly-129–Ser-162 lie on the Extracellular side of the membrane. A glycan (N-linked (GlcNAc...) asparagine) is linked at Asn-136. Residues Leu-163–Val-183 traverse the membrane as a helical segment. The Cytoplasmic segment spans residues Leu-184–Pro-187.

This sequence belongs to the Casparian strip membrane proteins (CASP) family. As to quaternary structure, homodimer and heterodimers.

Its subcellular location is the cell membrane. This chain is CASP-like protein 3A2, found in Arabidopsis thaliana (Mouse-ear cress).